The sequence spans 501 residues: Aminoaldehyde dehydrogenase ALDH10A8, chloroplastic (501 aa).

Residues Asp99 and Leu189 each coordinate Na(+). NAD(+) is bound by residues 238-243 and 238-245; these read GSFATG and GSFATGSK. Glu260 (proton acceptor) is an active-site residue. NAD(+)-binding residues include Cys294 and Glu393. The Nucleophile role is filled by Cys294.

This sequence belongs to the aldehyde dehydrogenase family. In terms of assembly, homodimer. Widely expressed.

It is found in the cytoplasm. It localises to the plastid. Its subcellular location is the chloroplast. The enzyme catalyses 4-aminobutanal + NAD(+) + H2O = 4-aminobutanoate + NADH + 2 H(+). It carries out the reaction 3-aminopropanal + NAD(+) + H2O = beta-alanine + NADH + 2 H(+). The catalysed reaction is 4-(trimethylamino)butanal + NAD(+) + H2O = 4-(trimethylamino)butanoate + NADH + 2 H(+). It catalyses the reaction 4-guanidinobutanal + NAD(+) + H2O = 4-guanidinobutanoate + NADH + 2 H(+). The enzyme catalyses betaine aldehyde + NAD(+) + H2O = glycine betaine + NADH + 2 H(+). Its pathway is amine and polyamine biosynthesis; betaine biosynthesis via choline pathway; betaine from betaine aldehyde: step 1/1. Dehydrogenase that catalyzes the oxidation of several aminoaldehydes. Metabolizes and detoxifies aldehyde products of polyamine degradation to non-toxic amino acids. Catalyzes the oxidation of 4-aminobutanal and 3-aminopropanal to 4-aminobutanoate and beta-alanine, respectively. Production of 4-aminobutinoate by ALDH10A8 may confer tolerance to salt stress. Catalyzes the oxidation of 4-(trimethylamino)butanal and 4-guanidinobutanal to 4-trimethylammoniobutanoate and 4-guanidinobutanoate, respectively. Involved in glycine betaine biosynthesis. Catalyzes with low efficiency the oxidation of betaine aldehyde to glycine betaine. The polypeptide is Aminoaldehyde dehydrogenase ALDH10A8, chloroplastic (Arabidopsis thaliana (Mouse-ear cress)).